Here is a 157-residue protein sequence, read N- to C-terminus: MKILGIDPGTKNCGYAILEKSKFKTILLEAGLIKIKPNTLQYQITELCEGLDLIFKNHKFDEVAIEDIFFAYNPKTVLKLAQFRGALSLKILQLHGDFAEYTPLQVKKTVTGKAKADKEQVAFMVKKILGINKEIKPLDITDAIAIALTHANNLRIN.

Active-site residues include D7, E66, and D139. Residues D7, E66, and D139 each contribute to the Mg(2+) site.

It belongs to the RuvC family. Homodimer which binds Holliday junction (HJ) DNA. The HJ becomes 2-fold symmetrical on binding to RuvC with unstacked arms; it has a different conformation from HJ DNA in complex with RuvA. In the full resolvosome a probable DNA-RuvA(4)-RuvB(12)-RuvC(2) complex forms which resolves the HJ. Requires Mg(2+) as cofactor.

It localises to the cytoplasm. It carries out the reaction Endonucleolytic cleavage at a junction such as a reciprocal single-stranded crossover between two homologous DNA duplexes (Holliday junction).. Its function is as follows. The RuvA-RuvB-RuvC complex processes Holliday junction (HJ) DNA during genetic recombination and DNA repair. Endonuclease that resolves HJ intermediates. Cleaves cruciform DNA by making single-stranded nicks across the HJ at symmetrical positions within the homologous arms, yielding a 5'-phosphate and a 3'-hydroxyl group; requires a central core of homology in the junction. The consensus cleavage sequence is 5'-(A/T)TT(C/G)-3'. Cleavage occurs on the 3'-side of the TT dinucleotide at the point of strand exchange. HJ branch migration catalyzed by RuvA-RuvB allows RuvC to scan DNA until it finds its consensus sequence, where it cleaves and resolves the cruciform DNA. This is Crossover junction endodeoxyribonuclease RuvC from Campylobacter concisus (strain 13826).